A 280-amino-acid polypeptide reads, in one-letter code: Protein YibA (280 aa).

The chain is Protein YibA (yibA) from Escherichia coli O157:H7.